Here is a 313-residue protein sequence, read N- to C-terminus: D-alanine--D-alanine ligase (313 aa).

An ATP-grasp domain is found at 108–308; that stretch reads KLVWQQTGVP…YSELVVKVLS (201 aa). Residue 138-193 participates in ATP binding; sequence VAKLGLPLFVKPASEGSSVAVLKVKTADALPAALSEAATHDKIVIVEKSIEGGGEY. Mg(2+)-binding residues include aspartate 262, glutamate 275, and asparagine 277.

Belongs to the D-alanine--D-alanine ligase family. Requires Mg(2+) as cofactor. Mn(2+) is required as a cofactor.

It localises to the cytoplasm. It carries out the reaction 2 D-alanine + ATP = D-alanyl-D-alanine + ADP + phosphate + H(+). Its pathway is cell wall biogenesis; peptidoglycan biosynthesis. Functionally, cell wall formation. This is D-alanine--D-alanine ligase from Burkholderia vietnamiensis (strain G4 / LMG 22486) (Burkholderia cepacia (strain R1808)).